A 798-amino-acid chain; its full sequence is Exo-1,4-beta-xylosidase xlnD (798 aa).

The first 20 residues, 1-20 (MPGAASIVAVLAALLPTALG), serve as a signal peptide directing secretion. N-linked (GlcNAc...) asparagine glycosylation is found at Asn23, Asn87, Asn142, and Asn237. The active site involves Asp310. Residues Asn326, Asn391, Asn404, Asn443, Asn480, Asn522, Asn618, Asn645, Asn658, Asn685, and Asn707 are each glycosylated (N-linked (GlcNAc...) asparagine).

Belongs to the glycosyl hydrolase 3 family.

Its subcellular location is the secreted. It carries out the reaction Hydrolysis of (1-&gt;4)-beta-D-xylans, to remove successive D-xylose residues from the non-reducing termini.. The protein operates within glycan degradation; xylan degradation. Xylan 1,4-beta-xylosidase involved in the hydrolysis of xylan, a major structural heterogeneous polysaccharide found in plant biomass representing the second most abundant polysaccharide in the biosphere, after cellulose. This Aspergillus oryzae (strain ATCC 42149 / RIB 40) (Yellow koji mold) protein is Exo-1,4-beta-xylosidase xlnD (xlnD).